Reading from the N-terminus, the 157-residue chain is uncharacterized protein (157 aa).

4 consecutive transmembrane segments (helical) span residues 29-49 (LLII…PAYF), 52-72 (VLHV…GFGI), 93-113 (LGSV…RTWL), and 117-137 (NEMF…TITA).

It is found in the cell membrane. This is an uncharacterized protein from Bacillus subtilis (strain 168).